Consider the following 432-residue polypeptide: Ribosomal protein uS12 methylthiotransferase RimO (432 aa).

Positions 4-122 (NKVDIITLGC…LISDLGKSYH (119 aa)) constitute an MTTase N-terminal domain. C13, C51, C85, C146, C150, and C153 together coordinate [4Fe-4S] cluster. One can recognise a Radical SAM core domain in the interval 132 to 363 (TTPRHYAYVK…MRVQEGISAD (232 aa)). A TRAM domain is found at 366–432 (ASKVGQTFRV…AFDLYGKVLN (67 aa)).

The protein belongs to the methylthiotransferase family. RimO subfamily. [4Fe-4S] cluster serves as cofactor.

It localises to the cytoplasm. It carries out the reaction L-aspartate(89)-[ribosomal protein uS12]-hydrogen + (sulfur carrier)-SH + AH2 + 2 S-adenosyl-L-methionine = 3-methylsulfanyl-L-aspartate(89)-[ribosomal protein uS12]-hydrogen + (sulfur carrier)-H + 5'-deoxyadenosine + L-methionine + A + S-adenosyl-L-homocysteine + 2 H(+). Its function is as follows. Catalyzes the methylthiolation of an aspartic acid residue of ribosomal protein uS12. The chain is Ribosomal protein uS12 methylthiotransferase RimO from Parabacteroides distasonis (strain ATCC 8503 / DSM 20701 / CIP 104284 / JCM 5825 / NCTC 11152).